The chain runs to 427 residues: Putative ABC transporter substrate-binding protein YesO (427 aa).

The protein belongs to the bacterial solute-binding protein 1 family.

Functionally, may play a role in the degradation of type I rhamnogalacturonan derived from plant cell walls. This is Putative ABC transporter substrate-binding protein YesO (yesO) from Bacillus subtilis (strain 168).